A 780-amino-acid polypeptide reads, in one-letter code: Gelsolin (780 aa).

M1 bears the N-acetylmethionine; alternate mark. The signal sequence occupies residues M1–A25. The actin-severing stretch occupies residues V51–F174. The stretch at F74–F155 is one Gelsolin-like 1 repeat. Y84 is subject to Phosphotyrosine. Positions 90, 91, 122, 134, 139, and 141 each coordinate Ca(2+). The actin-actin interfilament contact point stretch occupies residues D121–G124. K160–K167 is a binding site for a 1,2-diacyl-sn-glycero-3-phospho-(1D-myo-inositol-4,5-bisphosphate). Residue V170 participates in Ca(2+) binding. An a 1,2-diacyl-sn-glycero-3-phospho-(1D-myo-inositol-4,5-bisphosphate)-binding site is contributed by R186–R194. One copy of the Gelsolin-like 2 repeat lies at V196–M268. Positions 211 and 212 each coordinate Ca(2+). C213 and C226 are disulfide-bonded. Residue E234 participates in Ca(2+) binding. A disordered region spans residues G244 to L269. Residues D284, E327, D328, and E352 each contribute to the Ca(2+) site. A Gelsolin-like 3 repeat occupies D315–F387. 2 positions are modified to phosphotyrosine: Y407 and Y463. The tract at residues A432–A780 is actin-binding, Ca-sensitive. Residues S453–M534 form a Gelsolin-like 4 repeat. Residues G469, D470, E500, D512, G517, P519, and T549 each coordinate Ca(2+). One copy of the Gelsolin-like 5 repeat lies at R575 to W640. K582 carries the post-translational modification N6-acetyllysine. Residues N589 and D590 each coordinate Ca(2+). Y601 is modified (phosphotyrosine). E612 provides a ligand contact to Ca(2+). A Phosphotyrosine modification is found at Y649. One copy of the Gelsolin-like 6 repeat lies at I679–F754. 3 residues coordinate Ca(2+): D694, D695, and E717. The residue at position 740 (T740) is a Phosphothreonine.

It belongs to the villin/gelsolin family. As to quaternary structure, binds to actin and to fibronectin. Identified in a complex composed of ACTA1, COBL, GSN and TMSB4X. Interacts with the inactive form of EIF2AK2/PKR. Interacts with FLII. Phosphorylated on tyrosine residues in vitro.

The protein resides in the cytoplasm. It is found in the cytoskeleton. Its subcellular location is the secreted. Calcium-regulated, actin-modulating protein that binds to the plus (or barbed) ends of actin monomers or filaments, preventing monomer exchange (end-blocking or capping). It can promote the assembly of monomers into filaments (nucleation) as well as sever filaments already formed. Plays a role in ciliogenesis. This Mus musculus (Mouse) protein is Gelsolin (Gsn).